We begin with the raw amino-acid sequence, 634 residues long: GTP-binding protein 4 (634 aa).

An N-acetylalanine modification is found at A2. Position 103 is an N6-acetyllysine; alternate (K103). K103 participates in a covalent cross-link: Glycyl lysine isopeptide (Lys-Gly) (interchain with G-Cter in SUMO2); alternate. S122 is subject to Phosphoserine. The OBG-type G domain maps to 169-340; sequence RTLLLCGYPN…VKTEACDRLL (172 aa). GTP is bound by residues 175–182, 221–225, and 289–292; these read GYPNVGKS, DTPGI, and NKCD. K332 participates in a covalent cross-link: Glycyl lysine isopeptide (Lys-Gly) (interchain with G-Cter in SUMO2). 3 positions are modified to phosphoserine: S468, S470, and S472. Positions 494 to 634 are disordered; it reads KILQSKEKNK…KRKAGKKDRR (141 aa). K534 is covalently cross-linked (Glycyl lysine isopeptide (Lys-Gly) (interchain with G-Cter in SUMO2)). Positions 544-554 are enriched in basic residues; it reads RRSRSVTRKRK. A Phosphoserine modification is found at S558. Low complexity predominate over residues 560–572; sequence PPSSTARSRSCSR. Positions 573-585 are enriched in basic and acidic residues; that stretch reads TPRDVSGLRDVKM. Residues 586-604 show a composition bias toward basic residues; sequence VKKAKTMMKKAQKKMNRLG. Residues 605-618 show a composition bias toward basic and acidic residues; that stretch reads KKGEADRHVFDMKP. Positions 619–634 are enriched in basic residues; that stretch reads KHLLSGKRKAGKKDRR.

This sequence belongs to the TRAFAC class OBG-HflX-like GTPase superfamily. OBG GTPase family. NOG subfamily. As to quaternary structure, associates with pre-60S ribosomal particles. Interacts with MINAS-60 (product of an alternative open reading frame of RBM10). In terms of tissue distribution, ubiquitous.

The protein resides in the nucleus. It localises to the nucleolus. Its function is as follows. Involved in the biogenesis of the 60S ribosomal subunit. Acts as TP53 repressor, preventing TP53 stabilization and cell cycle arrest. The polypeptide is GTP-binding protein 4 (Gtpbp4) (Mus musculus (Mouse)).